The chain runs to 114 residues: Acetyltransferase At1g77540 (114 aa).

An N-acetylthreonine modification is found at T2. The N-acetyltransferase domain occupies 18–106 (KIVWNEGKRR…RNPSWKPLIH (89 aa)). Residues 52-55 (HTYV) and 61-66 (GLGLAS) each bind CoA. The active-site Nucleophile is C87. CoA contacts are provided by residues 88–89 (SY), T93, and R97.

The protein localises to the peroxisome. Functionally, possesses in vitro histone acetyltransferase activity with histones H3 and H4. The protein is Acetyltransferase At1g77540 of Arabidopsis thaliana (Mouse-ear cress).